The sequence spans 60 residues: Large ribosomal subunit protein uL30 (60 aa).

This sequence belongs to the universal ribosomal protein uL30 family. Part of the 50S ribosomal subunit.

The chain is Large ribosomal subunit protein uL30 from Verminephrobacter eiseniae (strain EF01-2).